A 287-amino-acid polypeptide reads, in one-letter code: Acetylglutamate kinase (287 aa).

Substrate is bound by residues 70-71 (GG), R92, and N184.

The protein belongs to the acetylglutamate kinase family. ArgB subfamily.

Its subcellular location is the cytoplasm. It catalyses the reaction N-acetyl-L-glutamate + ATP = N-acetyl-L-glutamyl 5-phosphate + ADP. The protein operates within amino-acid biosynthesis; L-arginine biosynthesis; N(2)-acetyl-L-ornithine from L-glutamate: step 2/4. Catalyzes the ATP-dependent phosphorylation of N-acetyl-L-glutamate. In Ruegeria pomeroyi (strain ATCC 700808 / DSM 15171 / DSS-3) (Silicibacter pomeroyi), this protein is Acetylglutamate kinase.